Here is an 816-residue protein sequence, read N- to C-terminus: uncharacterized protein (816 aa).

Asp503–Leu534 lines the NADP(+) pocket. Position 641 (Ser641) interacts with substrate. Residue Tyr661 is the Proton acceptor of the active site. 2 consecutive transmembrane segments (helical) span residues Phe743–Leu763 and Val777–Asn797.

The protein belongs to the short-chain dehydrogenases/reductases (SDR) family.

It is found in the membrane. This is an uncharacterized protein from Caenorhabditis elegans.